Consider the following 601-residue polypeptide: Putative pentatricopeptide repeat-containing protein At3g25060, mitochondrial (601 aa).

Residues Met-1–Gly-80 constitute a mitochondrion transit peptide. PPR repeat units follow at residues Gly-49–Arg-79, Gly-80–Pro-114, Asp-115–Asn-149, Asp-150–Arg-180, Asp-181–Arg-215, Asp-216–Met-250, Asn-251–Lys-281, Thr-282–Pro-316, Asp-317–Arg-347, Asp-351–Lys-381, Asp-382–Pro-416, Asp-417–Pro-452, and Ser-453–Pro-487. Residues Ile-488–Asn-563 are type E motif. The type E(+) motif stretch occupies residues Gly-564–Arg-594.

This sequence belongs to the PPR family. PCMP-E subfamily.

Its subcellular location is the mitochondrion. In Arabidopsis thaliana (Mouse-ear cress), this protein is Putative pentatricopeptide repeat-containing protein At3g25060, mitochondrial (PCMP-E96).